The primary structure comprises 524 residues: Leukotriene-B4 omega-hydroxylase 3 (524 aa).

2 residues coordinate heme: glutamate 328 and cysteine 468.

It belongs to the cytochrome P450 family. It depends on heme as a cofactor.

The protein localises to the endoplasmic reticulum membrane. The protein resides in the microsome membrane. The catalysed reaction is leukotriene B4 + reduced [NADPH--hemoprotein reductase] + O2 = 20-hydroxy-leukotriene B4 + oxidized [NADPH--hemoprotein reductase] + H2O + H(+). It participates in lipid metabolism; leukotriene B4 degradation. Functionally, cytochromes P450 are a group of heme-thiolate monooxygenases. Catalyzes the omega-hydroxylation of LTB4. The protein is Leukotriene-B4 omega-hydroxylase 3 (Cyp4f14) of Mus musculus (Mouse).